A 196-amino-acid chain; its full sequence is Nucleotide kinase gp1.7 (196 aa).

The disordered stretch occupies residues 97–118 (PRKPHLNKPEVTPTDDQPSAET).

As to quaternary structure, dodecamer.

The enzyme catalyses dGMP + ATP = dGDP + ADP. The catalysed reaction is dTMP + ATP = dTDP + ADP. In terms of biological role, nucleotide kinase that catalyzes the phosphorylation of dGMP and dTMP to dGDP and dTDP. A double mutation in this protein and the RecBCD inhibitor gp5.9 protein allow phage to overcome the retron Ec48 bacteriophage defense system. This protein alone when overexpressed in E.coli does not cause growth arrest; Y128C may be a silent mutation. This is Nucleotide kinase gp1.7 from Escherichia coli (Bacteriophage T7).